A 1481-amino-acid chain; its full sequence is Cystic fibrosis transmembrane conductance regulator (1481 aa).

Over 1–77 the chain is Cytoplasmic; sequence MQRSPLEKAS…KLINALRRCF (77 aa). Residues 78-98 form a helical membrane-spanning segment; that stretch reads FWRFTFYGILLYLGEVTKAVQ. Residues 81-365 enclose the ABC transmembrane type-1 1 domain; the sequence is FTFYGILLYL…WAVQTWYDSL (285 aa). Over 99–122 the chain is Extracellular; that stretch reads PLLLGRIIASYDPDNKTERSIAIY. The chain crosses the membrane as a helical span at residues 123–146; that stretch reads LGIGLCLLFIVRTLLLHPAIFGLH. The Cytoplasmic portion of the chain corresponds to 147 to 195; it reads HIGMQMRIAMFSLIYKKTLKLSSRVLDKISIGQLVSLLSNNLNKFDEGL. A helical membrane pass occupies residues 196 to 216; that stretch reads ALAHFVWIAPLQVALLMGLIW. The Extracellular portion of the chain corresponds to 217–222; the sequence is ELLQAS. A helical transmembrane segment spans residues 223 to 243; it reads AFCGLGFLIVLALFQAGLGRM. The Cytoplasmic segment spans residues 244–298; that stretch reads MMKYRDQRAGKINERLVITSEMIENIQSVKAYCWEEAMEKMIENLRQTELKLTRK. Residues 299-319 form a helical membrane-spanning segment; sequence AAYVRYFNSSAFFFSGFFVVF. Residues 320–339 are Extracellular-facing; it reads LSVLPYALIKGIILRKIFTT. Residues 340–358 traverse the membrane as a helical segment; sequence ISFCIVLRMAVTRQFPWAV. Topologically, residues 359-858 are cytoplasmic; it reads QTWYDSLGAI…YLRYITLHKS (500 aa). Residues W401, S434, 458-465, and Q493 each bind ATP; that span reads GSTGAGKT. Positions 423–646 constitute an ABC transporter 1 domain; the sequence is NDDNNLFFSN…RPDFSSKLMG (224 aa). C524 carries the S-palmitoyl cysteine lipid modification. Phosphoserine is present on residues S549 and S660. Positions 654–831 are disordered R region; the sequence is SSERRNSILT…EEINEEDLKE (178 aa). S670 is subject to Phosphoserine; by PKA. The residue at position 686 (S686) is a Phosphoserine. A Glycyl lysine isopeptide (Lys-Gly) (interchain with G-Cter in ubiquitin) cross-link involves residue K688. Phosphoserine is present on residues S700 and S712. A Phosphothreonine modification is found at T717. Residues S737, S753, S768, S790, S795, and S813 each carry the phosphoserine modification. Residues 859–879 traverse the membrane as a helical segment; that stretch reads LIFVLIWCLVIFLAEVAASLV. Positions 859–1155 constitute an ABC transmembrane type-1 2 domain; it reads LIFVLIWCLV…AVNSSIDVDS (297 aa). Residues 880 to 918 lie on the Extracellular side of the membrane; it reads VLWLLRNTPFQDKGNSTYSRNNSYAVIITNTSSYYVFYI. N-linked (GlcNAc...) asparagine glycosylation is found at N894, N900, and N909. A discontinuously helical transmembrane segment spans residues 919–939; sequence YVGVADTLLALGFFRGLPLVH. At 940–990 the chain is on the cytoplasmic side; it reads TLITVSKILHHKMLHSVLQAPMSTLNTLKAGGILNRFSKDIAILDDLLPLT. Residues 991–1011 traverse the membrane as a helical segment; that stretch reads IFDFIQLLLIVIGAIAVVSVL. Residues 1012–1013 lie on the Extracellular side of the membrane; sequence QP. A helical transmembrane segment spans residues 1014–1034; the sequence is YIFLATVPVIAAFVLLRAYFL. Residues 1035–1095 lie on the Cytoplasmic side of the membrane; that stretch reads QTSQQLKQLE…TANWFLYLST (61 aa). A helical transmembrane segment spans residues 1096 to 1116; that stretch reads LRWFQMRIEMIFVIFFIAVTF. At 1117–1130 the chain is on the extracellular side; sequence ISILTTGEGEGTVG. The helical transmembrane segment at 1131–1151 threads the bilayer; it reads IILTLAMNIMSTLQWAVNSSI. At 1152-1481 the chain is on the cytoplasmic side; that stretch reads DVDSLMRSVS…TEEEVQETRL (330 aa). An ABC transporter 2 domain is found at 1211-1444; that stretch reads MTIKDLTAKY…KSLFRQAISH (234 aa). ATP contacts are provided by residues Y1220 and 1245–1252; that span reads GRTGSGKS. An interaction with GORASP2 region spans residues 1387 to 1481; the sequence is RALKQAFADC…TEEEVQETRL (95 aa). C1396 is lipidated: S-palmitoyl cysteine. A phosphoserine mark is found at S1445 and S1457. A disordered region spans residues 1453 to 1481; it reads HRNSSKYKSRPQIASLKEETEEEVQETRL. Acidic residues predominate over residues 1471–1481; the sequence is ETEEEVQETRL. Residues 1479 to 1481 carry the PDZ-binding motif; sequence TRL.

Belongs to the ABC transporter superfamily. ABCC family. CFTR transporter (TC 3.A.1.202) subfamily. Monomer; does not require oligomerization for channel activity. May form oligomers in the membrane. Interacts with SLC26A3, SLC26A6 and NHERF1. Interacts with SHANK2. Interacts with MYO6. Interacts (via C-terminus) with GOPC (via PDZ domain); this promotes CFTR internalization and thereby decreases channel activity. Interacts with SLC4A7 through NHERF1. Found in a complex with MYO5B and RAB11A. Interacts with ANO1. Interacts with SLC26A8. Interacts with AHCYL1; the interaction increases CFTR activity. Interacts with CSE1L. The core-glycosylated form interacts with GORASP2 (via PDZ GRASP-type 1 domain) in respone to ER stress. Interacts with MARCHF2; the interaction leads to CFTR ubiqtuitination and degradation. Interacts with ADGRG2. N-glycosylated. Post-translationally, phosphorylated; cAMP treatment promotes phosphorylation and activates the channel. Dephosphorylation decreases the ATPase activity (in vitro). Phosphorylation at PKA sites activates the channel. Phosphorylation at PKC sites enhances the response to phosphorylation by PKA. Phosphorylated by AMPK; this inhibits channel activity. In terms of processing, ubiquitinated, leading to its degradation in the lysosome. Deubiquitination by USP10 in early endosomes enhances its endocytic recycling to the cell membrane. Ubiquitinated by RNF185 during ER stress. Ubiquitinated by MARCHF2.

It is found in the apical cell membrane. The protein localises to the early endosome membrane. Its subcellular location is the cell membrane. The protein resides in the recycling endosome membrane. It localises to the endoplasmic reticulum membrane. It is found in the nucleus. It catalyses the reaction ATP + H2O + closed Cl(-) channel = ADP + phosphate + open Cl(-) channel.. The enzyme catalyses chloride(in) = chloride(out). The catalysed reaction is hydrogencarbonate(in) = hydrogencarbonate(out). It carries out the reaction ATP + H2O = ADP + phosphate + H(+). In terms of biological role, epithelial ion channel that plays an important role in the regulation of epithelial ion and water transport and fluid homeostasis. Mediates the transport of chloride ions across the cell membrane. Possesses an intrinsic ATPase activity and utilizes ATP to gate its channel; the passive flow of anions through the channel is gated by cycles of ATP binding and hydrolysis by the ATP-binding domains. The ion channel is also permeable to HCO(3)(-); selectivity depends on the extracellular chloride concentration. Exerts its function also by modulating the activity of other ion channels and transporters. Contributes to the regulation of the pH and the ion content of the epithelial fluid layer. Modulates the activity of the epithelial sodium channel (ENaC) complex, in part by regulating the cell surface expression of the ENaC complex. May regulate bicarbonate secretion and salvage in epithelial cells by regulating the transporter SLC4A7. Can inhibit the chloride channel activity of ANO1. Plays a role in the chloride and bicarbonate homeostasis during sperm epididymal maturation and capacitation. This chain is Cystic fibrosis transmembrane conductance regulator, found in Callithrix jacchus (White-tufted-ear marmoset).